The chain runs to 221 residues: NIP3 homolog (221 aa).

The segment at G24 to P55 is disordered. Residue K26 forms a Glycyl lysine isopeptide (Lys-Gly) (interchain with G-Cter in ubiquitin) linkage. A compositionally biased stretch (low complexity) spans Q32 to A49. A helical transmembrane segment spans residues V189–F209. The interval V189–F209 is required for initiation of apoptosis.

It belongs to the NIP3 family. In terms of assembly, homodimer; via transmembrane domain. Interacts with ced-3 and ced-9. Ubiquitinated and degraded by the proteasome. Under oxidative stress conditions, ubiquitinated at Lys-26 in a pink-1 dependent manner. Colocalizes with pdr-1 and may be ubiquitinated by it. In terms of tissue distribution, expressed in all somatic tissues including neurons, pharynx, intestine, body wall muscles and vulva muscles.

The protein localises to the mitochondrion outer membrane. Its function is as follows. Initiates apoptosis in a BH3-independent mechanism possibly by recruiting ced-3 to mitochondria and other cytoplasmic membranes. Has a role in lifespan and tumor growth. Required for the induction of mitophagy under stress conditions. This is NIP3 homolog from Caenorhabditis elegans.